A 503-amino-acid polypeptide reads, in one-letter code: Glutamate--tRNA ligase (503 aa).

The 'HIGH' region motif lies at 14–24 (PSPTGSLHIGG). Positions 261-265 (KLSKR) match the 'KMSKS' region motif. Lys-264 lines the ATP pocket.

It belongs to the class-I aminoacyl-tRNA synthetase family. Glutamate--tRNA ligase type 1 subfamily. As to quaternary structure, monomer.

The protein resides in the cytoplasm. The enzyme catalyses tRNA(Glu) + L-glutamate + ATP = L-glutamyl-tRNA(Glu) + AMP + diphosphate. In terms of biological role, catalyzes the attachment of glutamate to tRNA(Glu) in a two-step reaction: glutamate is first activated by ATP to form Glu-AMP and then transferred to the acceptor end of tRNA(Glu). The sequence is that of Glutamate--tRNA ligase from Chloroflexus aurantiacus (strain ATCC 29366 / DSM 635 / J-10-fl).